A 356-amino-acid chain; its full sequence is tRNA-specific 2-thiouridylase MnmA (356 aa).

Residues 6–13 and Leu32 each bind ATP; that span reads GMSGGVDS. Catalysis depends on Cys102, which acts as the Nucleophile. Residues Cys102 and Cys200 are joined by a disulfide bond. Gly127 lines the ATP pocket. The interval 150–152 is interaction with tRNA; the sequence is RDQ. Residue Cys200 is the Cysteine persulfide intermediate of the active site. The tract at residues 302–303 is interaction with tRNA; that stretch reads RY.

Belongs to the MnmA/TRMU family.

It localises to the cytoplasm. The catalysed reaction is S-sulfanyl-L-cysteinyl-[protein] + uridine(34) in tRNA + AH2 + ATP = 2-thiouridine(34) in tRNA + L-cysteinyl-[protein] + A + AMP + diphosphate + H(+). In terms of biological role, catalyzes the 2-thiolation of uridine at the wobble position (U34) of tRNA, leading to the formation of s(2)U34. The sequence is that of tRNA-specific 2-thiouridylase MnmA from Aquifex aeolicus (strain VF5).